Here is a 420-residue protein sequence, read N- to C-terminus: 3-phosphoshikimate 1-carboxyvinyltransferase (420 aa).

The disordered stretch occupies residues 1–24 (MTRTAKLTIIPPGRPLSGRAMPPG). Positions 26, 27, and 31 each coordinate 3-phosphoshikimate. Position 26 (Lys-26) interacts with phosphoenolpyruvate. 2 residues coordinate phosphoenolpyruvate: Gly-97 and Arg-125. Ser-170, Ser-171, Gln-172, Asp-297, Asn-320, and Lys-324 together coordinate 3-phosphoshikimate. Gln-172 serves as a coordination point for phosphoenolpyruvate. Asp-297 serves as the catalytic Proton acceptor. Phosphoenolpyruvate is bound by residues Arg-328, Arg-375, and Lys-400.

It belongs to the EPSP synthase family. Monomer.

The protein localises to the cytoplasm. It carries out the reaction 3-phosphoshikimate + phosphoenolpyruvate = 5-O-(1-carboxyvinyl)-3-phosphoshikimate + phosphate. It participates in metabolic intermediate biosynthesis; chorismate biosynthesis; chorismate from D-erythrose 4-phosphate and phosphoenolpyruvate: step 6/7. Catalyzes the transfer of the enolpyruvyl moiety of phosphoenolpyruvate (PEP) to the 5-hydroxyl of shikimate-3-phosphate (S3P) to produce enolpyruvyl shikimate-3-phosphate and inorganic phosphate. This Rhizobium etli (strain CIAT 652) protein is 3-phosphoshikimate 1-carboxyvinyltransferase.